The chain runs to 250 residues: Transmembrane protein 106C (250 aa).

The interval 1–25 (MGSQHSAAARPSSCRRKQEDDRDGL) is disordered. Gly2 carries N-myristoyl glycine lipidation. The span at 16–25 (RKQEDDRDGL) shows a compositional bias: basic and acidic residues. The helical transmembrane segment at 87–107 (YVLLSILLCLLASGLVVFFLF) threads the bilayer. N-linked (GlcNAc...) asparagine glycosylation is found at Asn173 and Asn186. A helical transmembrane segment spans residues 197–217 (FSYVYFFCTVPEILVHNIVIF).

Belongs to the TMEM106 family. Interacts with TMEM106B.

The protein localises to the endoplasmic reticulum membrane. It localises to the membrane. The polypeptide is Transmembrane protein 106C (TMEM106C) (Homo sapiens (Human)).